Reading from the N-terminus, the 393-residue chain is MSNPSIVIASAARTAVGSFNGAFGNTLAHELGAAAIKAVLERAGVEAGEVDEVILGQVLPAGEGQNPARQAAMKAGLPQEKTAWGMNQLCGSGLRAVALGMQQIATGDAKVIVAGGMESMSMAPHCAHLRGGVKMGDYKMIDTMIKDGLTDAFYGYHMGITAENVARKWQLTREEQDEFALASQNKAEAAQKAGRFADEIVPFVVKTRKGDVNVDQDEYIRHGATLDSIAKLRPAFDKEGTVTAGNASGLNDGAAAALLMTEAEAARRGIQPLARIVSWATAGVDPQIMGTGPIPASRKALEKAGWSVADIELVEANEAFAAQACAVNKDLGWDPSIVNVNGGAIAIGHPIGASGARVLNTLLFEMKRRGVSKGLATLCIGGGMGVAMCVERL.

C90 (acyl-thioester intermediate) is an active-site residue. Active-site proton acceptor residues include H349 and C379.

It belongs to the thiolase-like superfamily. Thiolase family. Homotetramer.

It is found in the cytoplasm. It catalyses the reaction 2 acetyl-CoA = acetoacetyl-CoA + CoA. Its pathway is biopolymer metabolism; poly-(R)-3-hydroxybutanoate biosynthesis. It functions in the pathway metabolic intermediate biosynthesis; (R)-mevalonate biosynthesis; (R)-mevalonate from acetyl-CoA: step 1/3. This is Acetyl-CoA acetyltransferase from Rhizobium meliloti (strain 1021) (Ensifer meliloti).